The sequence spans 780 residues: Potassium/sodium hyperpolarization-activated cyclic nucleotide-gated channel 3 (780 aa).

A disordered region spans residues 1–47 (MEEEARPAVGDGEAATPARETPPAAPAQARAASGGVPESAPEPKRRQ). Over 1 to 96 (MEEEARPAVG…PYSDFRFYWD (96 aa)) the chain is Cytoplasmic. Residues 13–32 (EAATPARETPPAAPAQARAA) are compositionally biased toward low complexity. Residues 45-90 (RRQLGTLLQPTVNKFSLRVFGSHKAVEIEQERVKSAGAWIIHPYSD) form an involved in subunit assembly region. A helical membrane pass occupies residues 97-117 (LIMLLLMVGNLIVLPVGITFF). Residues 118-123 (KEENSP) are Extracellular-facing. Residues 124–144 (PWIVFNVLSDTFFLLDLVLNF) form a helical membrane-spanning segment. Over 145-170 (RTGIVVEEGAEILLAPRAIRTRYLRT) the chain is Cytoplasmic. A helical membrane pass occupies residues 171 to 191 (WFLVDLISSIPVDYIFLVVEL). Residues 192-200 (EPRLDAEVY) are Extracellular-facing. A helical; Voltage-sensor membrane pass occupies residues 201–221 (KTARALRIVRFTKILSLLRLL). Residues 222–252 (RLSRLIRYMHQWEEIFHMTYDLASAVVRIFN) lie on the Cytoplasmic side of the membrane. The helical transmembrane segment at 253-273 (LIGMMLLLCHWDGCLQFLVPM) threads the bilayer. Topologically, residues 274-296 (LQDFPSDCWVSMNRMVNHSWGRQ) are extracellular. Asparagine 290 carries N-linked (GlcNAc...) asparagine glycosylation. The pore-forming intramembrane region spans 297 to 318 (YSHALFKAMSHMLCIGYGQQAP). Topologically, residues 319–328 (VGMPDVWLTM) are extracellular. The helical transmembrane segment at 329–349 (LSMIVGATCYAMFIGHATALI) threads the bilayer. Residues 350-780 (QSLDSSRRQY…PRGPQISANM (431 aa)) lie on the Cytoplasmic side of the membrane. Residues 353 to 780 (DSSRRQYQEK…PRGPQISANM (428 aa)) form an interaction with KCTD3 region. 3',5'-cyclic AMP-binding residues include glycine 491, glutamate 492, cysteine 494, arginine 501, threonine 502, arginine 542, and arginine 545. Residues 549–569 (KNSILQRKRSEPSPGSSSGGV) form a disordered region. Serine 634 carries the post-translational modification Phosphoserine. Over residues 687–698 (ASLSRTGRSQVS) the composition is skewed to polar residues. Positions 687–780 (ASLSRTGRSQ…PRGPQISANM (94 aa)) are disordered.

The protein belongs to the potassium channel HCN family. As to quaternary structure, homotetramer. The potassium channel is composed of a homo- or heterotetrameric complex of pore-forming subunits. Interacts with HCN1. Interacts with KCTD3; this interaction increases cell surface expression and current density of this channel. Interacts with PEX5L.

It is found in the cell membrane. It carries out the reaction K(+)(in) = K(+)(out). It catalyses the reaction Na(+)(in) = Na(+)(out). Its activity is regulated as follows. Inhibited by Cs(1+) and ivabradine. Unlike HCN2 and HCN4, HCN3 is insensitive to cyclic nucleotides, such as cAMP or cGMP. This lack of sensitivity of HCN3, despite harboring a functional cyclic nucleotide-binding domain (CNBD), may be explained by its shorter C-terminal sequence, which may alter the normal autoinhibition of the channel. Phosphatidylinositol-4,5-bisphosphate (PIP(2)) shifts HCN3 activation to more depolarized potentials and accelerated activation kinetics. Its function is as follows. Hyperpolarization-activated ion channel that are permeable to sodium and potassium ions, with an about 3:1 preference for potassium ions. Contributes to the native pacemaker currents in heart (If) and in neurons (Ih). In particular, plays a pivotal role in maintaining excitability and promoting rhythmic burst firing within hypothalamic nuclei. Exerts a significant influence on the configuration of the cardiac action potential waveform. Does not appear to play a prominent role in the processing of acute, neuropathic, or inflammatory pain. The chain is Potassium/sodium hyperpolarization-activated cyclic nucleotide-gated channel 3 (Hcn3) from Rattus norvegicus (Rat).